A 153-amino-acid chain; its full sequence is Alpha-amylase type B isozyme (153 aa).

Substrate contacts are provided by residues lysine 19, 25–27, histidine 38, glutamine 44, lysine 123, and tryptophan 150; that span reads GWW.

This sequence belongs to the glycosyl hydrolase 13 family. As to quaternary structure, monomer. Ca(2+) is required as a cofactor.

The enzyme catalyses Endohydrolysis of (1-&gt;4)-alpha-D-glucosidic linkages in polysaccharides containing three or more (1-&gt;4)-alpha-linked D-glucose units.. This is Alpha-amylase type B isozyme (AMY1.4) from Hordeum vulgare (Barley).